A 312-amino-acid polypeptide reads, in one-letter code: Ribosomal RNA small subunit methyltransferase H (312 aa).

S-adenosyl-L-methionine is bound by residues 34–36 (AGH), D54, F81, D102, and Q109.

Belongs to the methyltransferase superfamily. RsmH family.

It is found in the cytoplasm. It carries out the reaction cytidine(1402) in 16S rRNA + S-adenosyl-L-methionine = N(4)-methylcytidine(1402) in 16S rRNA + S-adenosyl-L-homocysteine + H(+). Specifically methylates the N4 position of cytidine in position 1402 (C1402) of 16S rRNA. The polypeptide is Ribosomal RNA small subunit methyltransferase H (Citrifermentans bemidjiense (strain ATCC BAA-1014 / DSM 16622 / JCM 12645 / Bem) (Geobacter bemidjiensis)).